The chain runs to 129 residues: Protein BUNDLE SHEATH DEFECTIVE 2, chloroplastic (129 aa).

Residues 1–43 (MAATASLTTTAPSPPALLKASAPLLISFRPVSRHCKNLCIKTK) constitute a chloroplast transit peptide. The CR-type zinc-finger motif lies at 49-123 (QSAKKHQKVK…AGFLGGFLST (75 aa)). Positions 62, 65, 68, 73, 76, 97, 100, 105, 108, and 111 each coordinate Zn(2+).

The protein belongs to the BSD2 chaperone family. In terms of assembly, interacts with the RuBisCo large subunit (RbcL) assembled as an intermediate complex made of eight RbcL and eight BSD2 subunits. Expressed in shoot tissues, in both bundle sheath and mesophyll cells.

The protein resides in the plastid. Its subcellular location is the chloroplast stroma. In terms of biological role, chloroplast chaperone required for RuBisCo complex biogenesis and translational regulation of the RuBisCo large subunit (RbcL). Stabilizes an end-state assembly intermediate of eight RbcL subunits until the small subunits (RBCSs) become available to produce a complete stable RuBisCo complex containing eight small and eight large subunits. Involved in the differentiation of bundle sheath cells, especially chloroplast structure. In Zea mays (Maize), this protein is Protein BUNDLE SHEATH DEFECTIVE 2, chloroplastic.